Reading from the N-terminus, the 385-residue chain is 1-deoxy-D-xylulose 5-phosphate reductoisomerase (385 aa).

Residues Thr-10, Gly-11, Ser-12, Ile-13, Gly-36, Asn-38, and Asn-122 each coordinate NADPH. Lys-123 is a binding site for 1-deoxy-D-xylulose 5-phosphate. Glu-124 contacts NADPH. Asp-148 lines the Mn(2+) pocket. 1-deoxy-D-xylulose 5-phosphate is bound by residues Ser-149, Glu-150, Ser-174, and His-197. Glu-150 is a Mn(2+) binding site. Residue Gly-203 coordinates NADPH. Positions 210, 215, 216, and 219 each coordinate 1-deoxy-D-xylulose 5-phosphate. A Mn(2+)-binding site is contributed by Glu-219.

It belongs to the DXR family. It depends on Mg(2+) as a cofactor. Requires Mn(2+) as cofactor.

The catalysed reaction is 2-C-methyl-D-erythritol 4-phosphate + NADP(+) = 1-deoxy-D-xylulose 5-phosphate + NADPH + H(+). It participates in isoprenoid biosynthesis; isopentenyl diphosphate biosynthesis via DXP pathway; isopentenyl diphosphate from 1-deoxy-D-xylulose 5-phosphate: step 1/6. Functionally, catalyzes the NADPH-dependent rearrangement and reduction of 1-deoxy-D-xylulose-5-phosphate (DXP) to 2-C-methyl-D-erythritol 4-phosphate (MEP). The chain is 1-deoxy-D-xylulose 5-phosphate reductoisomerase from Geobacter sp. (strain M21).